Consider the following 365-residue polypeptide: Peptidyl-prolyl cis-trans isomerase FKBP42 (365 aa).

Residues 1 to 15 (MDESLEHQTQTHDQE) show a composition bias toward basic and acidic residues. Residues 1 to 44 (MDESLEHQTQTHDQESEIVTEGSAVVHSEPSQEGNVPPKVDSEA) are disordered. The segment at 1-163 (MDESLEHQTQ…EVIGFDETKE (163 aa)) is interaction with MDR1/PGP1. The PPIase FKBP-type domain occupies 67–159 (YSTCFLHYRA…LYEVEVIGFD (93 aa)). The tract at residues 163–337 (EGKARSDMTV…GKDEGGAKSK (175 aa)) is interaction with MRP1. TPR repeat units lie at residues 179 to 212 (ADRR…MGDD), 230 to 263 (NPCH…EEKN), and 264 to 297 (PKAL…APDD). A calmodulin-binding region spans residues 310–326 (QEKALYQKQKEMYKGIF). The chain crosses the membrane as a helical; Anchor for type IV membrane protein span at residues 338 to 357 (SLFWLIVLWQWFVSLFSRIF).

It belongs to the FKBP-type PPIase family. Interacts with calmodulin (CaM), MRP1, MRP2, MDR1/PGP1, MDR11/PGP19 and SHD/HSP90. Interacts with 1-naphthylphthalamic acid (NPA).

Its subcellular location is the cell membrane. It localises to the vacuole membrane. It is found in the endoplasmic reticulum. It carries out the reaction [protein]-peptidylproline (omega=180) = [protein]-peptidylproline (omega=0). Functionally, PPIases accelerate the folding of proteins. It catalyzes the cis-trans isomerization of proline imidic peptide bonds in oligopeptides. Modulates the uptake of MRP substrates into the vacuole; reduces metolachlor-GS (MOC-GS) and enhances 17-beta-estradiol 17-(beta-D-glucuronide) (E(2)17betaG) uptake. Regulates cell elongation and orientation. Functions as a positive regulator of PGP1-mediated auxin transport. Confers drug modulation of PGP1 efflux activity as interaction with NPA or flavonol quercetin prevents its physical and functional interaction with PGP1. Required for the proper localization of auxin-related ABCB transporters. Plays a role in brassinosteroid (BR) signaling pathway. Required for seed development by promoting stamen elongation and, to a lesser extent, anther dehiscence and pollen maturation, probably as a chaperone helping ABCB1 and ABCB19 auxin transporters localization and activation. Involved in auxin signaling in nectaries to promote starch accumulation to attract visiting pollinators. The sequence is that of Peptidyl-prolyl cis-trans isomerase FKBP42 from Arabidopsis thaliana (Mouse-ear cress).